Here is a 312-residue protein sequence, read N- to C-terminus: Aspartate carbamoyltransferase catalytic subunit (312 aa).

The carbamoyl phosphate site is built by arginine 55 and threonine 56. Lysine 83 is a binding site for L-aspartate. Positions 105, 138, and 141 each coordinate carbamoyl phosphate. L-aspartate-binding residues include arginine 171 and arginine 225. Carbamoyl phosphate is bound by residues glycine 266 and proline 267.

The protein belongs to the aspartate/ornithine carbamoyltransferase superfamily. ATCase family. As to quaternary structure, heterododecamer (2C3:3R2) of six catalytic PyrB chains organized as two trimers (C3), and six regulatory PyrI chains organized as three dimers (R2).

The enzyme catalyses carbamoyl phosphate + L-aspartate = N-carbamoyl-L-aspartate + phosphate + H(+). The protein operates within pyrimidine metabolism; UMP biosynthesis via de novo pathway; (S)-dihydroorotate from bicarbonate: step 2/3. In terms of biological role, catalyzes the condensation of carbamoyl phosphate and aspartate to form carbamoyl aspartate and inorganic phosphate, the committed step in the de novo pyrimidine nucleotide biosynthesis pathway. The protein is Aspartate carbamoyltransferase catalytic subunit of Corynebacterium efficiens (strain DSM 44549 / YS-314 / AJ 12310 / JCM 11189 / NBRC 100395).